The primary structure comprises 393 residues: Asparagine--oxo-acid transaminase (393 aa).

Glycine 39, tryptophan 126, and asparagine 176 together coordinate L-asparagine. Lysine 239 is subject to N6-(pyridoxal phosphate)lysine. Position 370 (arginine 370) interacts with L-asparagine.

It belongs to the class-I pyridoxal-phosphate-dependent aminotransferase family. Pyridoxal 5'-phosphate serves as cofactor.

It carries out the reaction a 2-oxocarboxylate + L-asparagine = 2-oxosuccinamate + an L-alpha-amino acid. The enzyme catalyses L-asparagine + 2-oxoglutarate = 2-oxosuccinamate + L-glutamate. Its function is as follows. Catalyzes the transamination reaction between L-asparagine and 2-oxoglutarate to produce L-glutamate and 2-oxosuccinamate. Is not active with pyruvate as amine acceptor. May also use other amino acids as substrates. This is Asparagine--oxo-acid transaminase from Streptococcus mutans serotype c (strain ATCC 700610 / UA159).